The chain runs to 1317 residues: Kinesin-like protein KIF16B (1317 aa).

One can recognise a Kinesin motor domain in the interval 3 to 358; that stretch reads SVKVAVRVRP…LRYANRAKNI (356 aa). ATP is bound at residue 102–109; it reads GQTGSGKS. Positions 370–425 form a coiled coil; it reads VKLIRELRAEIARLKTLLAQGNQIALLDSPTALSMEEKLQQNEARVQELTKEWTNK. Ser398 is subject to Phosphoserine. The FHA domain occupies 478-529; the sequence is TYVGRDDASTEQDIVLHGLDLESEHCIFENIGGTVTLIPLSGSQCSVNGVQI. A Phosphothreonine modification is found at Thr577. Phosphoserine is present on Ser582. Coiled-coil stretches lie at residues 595 to 882 and 936 to 1087; these read GLEF…DESV and LSLD…VQKD. The segment covering 1036-1048 has biased composition (polar residues); that stretch reads LASLNSGSREQSG. The tract at residues 1036 to 1057 is disordered; the sequence is LASLNSGSREQSGLQASLEAEQ. Residue Ser1052 is modified to Phosphoserine. Residues 1182-1296 form the PX domain; it reads DPIKISIPRY…KVGLTLSKHT (115 aa).

Belongs to the TRAFAC class myosin-kinesin ATPase superfamily. Kinesin family. In terms of assembly, interacts with RAB14. Interacts with PTPN21. As to expression, primarily expressed in brain. Also present in kidney, liver, intestine, placenta, leukocytes, heart and skeletal muscle (at protein level).

The protein resides in the cytoplasm. It is found in the cytoskeleton. Its subcellular location is the early endosome membrane. It localises to the spindle. Plus end-directed microtubule-dependent motor protein involved in endosome transport and receptor recycling and degradation. Regulates the plus end motility of early endosomes and the balance between recycling and degradation of receptors such as EGF receptor (EGFR) and FGF receptor (FGFR). Regulates the Golgi to endosome transport of FGFR-containing vesicles during early development, a key process for developing basement membrane and epiblast and primitive endoderm lineages during early postimplantation development. The sequence is that of Kinesin-like protein KIF16B (KIF16B) from Homo sapiens (Human).